The primary structure comprises 93 residues: Large ribosomal subunit protein bL31B (93 aa).

This sequence belongs to the bacterial ribosomal protein bL31 family. Type B subfamily. In terms of assembly, part of the 50S ribosomal subunit.

This Psychrobacter cryohalolentis (strain ATCC BAA-1226 / DSM 17306 / VKM B-2378 / K5) protein is Large ribosomal subunit protein bL31B.